Here is a 138-residue protein sequence, read N- to C-terminus: Large ribosomal subunit protein uL16 (138 aa).

This sequence belongs to the universal ribosomal protein uL16 family. As to quaternary structure, part of the 50S ribosomal subunit.

In terms of biological role, binds 23S rRNA and is also seen to make contacts with the A and possibly P site tRNAs. The chain is Large ribosomal subunit protein uL16 from Anaeromyxobacter dehalogenans (strain 2CP-C).